A 509-amino-acid polypeptide reads, in one-letter code: Glutamate--tRNA ligase (509 aa).

Positions 20–30 match the 'HIGH' region motif; the sequence is PSPTGFPHVGT. Zn(2+) contacts are provided by C117, C119, C144, and H146. Residues 261 to 265 carry the 'KMSKS' region motif; the sequence is KLSKR. Residue K264 coordinates ATP.

It belongs to the class-I aminoacyl-tRNA synthetase family. Glutamate--tRNA ligase type 1 subfamily. In terms of assembly, monomer. Requires Zn(2+) as cofactor.

Its subcellular location is the cytoplasm. The enzyme catalyses tRNA(Glu) + L-glutamate + ATP = L-glutamyl-tRNA(Glu) + AMP + diphosphate. Functionally, catalyzes the attachment of glutamate to tRNA(Glu) in a two-step reaction: glutamate is first activated by ATP to form Glu-AMP and then transferred to the acceptor end of tRNA(Glu). The chain is Glutamate--tRNA ligase from Psychrobacter cryohalolentis (strain ATCC BAA-1226 / DSM 17306 / VKM B-2378 / K5).